The sequence spans 117 residues: G antigen 12J (117 aa).

Residues 1 to 117 (MSWRGRSTYY…PEEGEKQSQC (117 aa)) are disordered. 2 stretches are compositionally biased toward acidic residues: residues 32-45 (FSDE…EEGE) and 87-96 (ECEDGPDGQE). The segment covering 103–117 (EEVKTPEEGEKQSQC) has biased composition (basic and acidic residues).

Belongs to the GAGE family.

The chain is G antigen 12J (GAGE12J) from Homo sapiens (Human).